The chain runs to 407 residues: Na(+)-translocating NADH-quinone reductase subunit F (407 aa).

The helical transmembrane segment at Ile3–Phe23 threads the bilayer. Residues Gly32 to Ile126 enclose the 2Fe-2S ferredoxin-type domain. Positions 69, 75, 78, and 110 each coordinate [2Fe-2S] cluster. The 141-residue stretch at Val129–Lys269 folds into the FAD-binding FR-type domain.

The protein belongs to the NqrF family. As to quaternary structure, composed of six subunits; NqrA, NqrB, NqrC, NqrD, NqrE and NqrF. [2Fe-2S] cluster serves as cofactor. Requires FAD as cofactor.

Its subcellular location is the cell inner membrane. The catalysed reaction is a ubiquinone + n Na(+)(in) + NADH + H(+) = a ubiquinol + n Na(+)(out) + NAD(+). Its function is as follows. NQR complex catalyzes the reduction of ubiquinone-1 to ubiquinol by two successive reactions, coupled with the transport of Na(+) ions from the cytoplasm to the periplasm. The first step is catalyzed by NqrF, which accepts electrons from NADH and reduces ubiquinone-1 to ubisemiquinone by a one-electron transfer pathway. This chain is Na(+)-translocating NADH-quinone reductase subunit F, found in Yersinia pseudotuberculosis serotype I (strain IP32953).